The chain runs to 128 residues: Thor profilin (128 aa).

It belongs to the Asgard profilin family.

The protein localises to the cytoplasm. Its subcellular location is the cytoskeleton. In terms of biological role, has no profilin activity against rabbit actin. The polypeptide is Thor profilin (Thorarchaeota archaeon (strain AB_25)).